The sequence spans 143 residues: Small ribosomal subunit protein uS12 (143 aa).

Proline 62 bears the Hydroxyproline mark.

Belongs to the universal ribosomal protein uS12 family. As to quaternary structure, component of the 40S small ribosomal subunit.

It localises to the cytoplasm. Its subcellular location is the cytosol. The protein resides in the rough endoplasmic reticulum. This is Small ribosomal subunit protein uS12 (rps-23) from Caenorhabditis elegans.